A 61-amino-acid chain; its full sequence is Short neurotoxin 1 (61 aa).

Cystine bridges form between cysteine 3–cysteine 23, cysteine 17–cysteine 40, cysteine 42–cysteine 53, and cysteine 54–cysteine 59.

It belongs to the three-finger toxin family. Short-chain subfamily. Type I alpha-neurotoxin sub-subfamily. In terms of tissue distribution, expressed by the venom gland.

It is found in the secreted. Its function is as follows. Binds with high affinity to muscular nicotinic acetylcholine receptors (nAChRs) (tested on Torpedo marmorata AChR, Kd=0.07 nM) and with low affinity to neuronal alpha-7/CHRNA7 nAChRs (tested on chimeric receptor, Kd=3 uM) and inhibit acetylcholine from binding to the receptor, thereby impairing neuromuscular transmission. Produces peripheral paralysis by blocking neuromuscular transmission at the postsynaptic site. The polypeptide is Short neurotoxin 1 (Naja pallida (Red spitting cobra)).